The primary structure comprises 268 residues: Proliferating cell nuclear antigen (268 aa).

The DNA-binding element occupies 61–80 (RCDRNPSMGMNLNNMAKMLK).

This sequence belongs to the PCNA family.

The protein localises to the nucleus. This protein is an auxiliary protein of DNA polymerase delta and is involved in the control of eukaryotic DNA replication by increasing the polymerase's processibility during elongation of the leading strand. This Catharanthus roseus (Madagascar periwinkle) protein is Proliferating cell nuclear antigen.